The sequence spans 530 residues: Synembryn-like chaperone C3E7.04c (530 aa).

A helical transmembrane segment spans residues 492-512 (SFIYHCYHSFVGPIHILLLMF).

Belongs to the synembryn family.

It is found in the membrane. Its function is as follows. Chaperone that specifically binds and folds some, but not all, nascent G alpha proteins prior to G protein heterotrimer formation, promoting their stability and activity. Also acts as a guanine nucleotide exchange factor (GEF) for G alpha proteins by stimulating exchange of bound GDP for free GTP. In Schizosaccharomyces pombe (strain 972 / ATCC 24843) (Fission yeast), this protein is Synembryn-like chaperone C3E7.04c.